The following is a 472-amino-acid chain: Nuclear receptor subfamily 0 group B member 1 (472 aa).

3 tandem repeats follow at residues 1–67, 68–135, and 136–202. Residues 1 to 255 are 4 X 67 AA tandem repeats; it reads MAGEDHPWQG…RLITLKDPQV (255 aa). 3 consecutive short sequence motifs (LXXLL motif) follow at residues 13-17, 80-84, and 148-152; these read LYNLL, LYSML, and LYSLL. The region spanning 190–471 is the NR LBD domain; the sequence is QSTQAMAFLY…DMMLEMLCAK (282 aa). Residues 203 to 255 form a 4; truncated repeat; that stretch reads VCGEEQPQQISVASGTPVSADQTPATPQEQPRAPWWDASPGVQRLITLKDPQV. Residues 214–231 show a composition bias toward polar residues; that stretch reads VASGTPVSADQTPATPQE. 2 disordered regions span residues 214–238 and 324–343; these read VASG…APWW and TTRR…ATEQ. Residues 463-468 carry the AF-2 motif motif; the sequence is MMLEML.

It belongs to the nuclear hormone receptor family. NR0 subfamily. In terms of assembly, homodimer. Interacts with NR5A1, NR5A2, NR0B2 and with COPS2. Interacts with ESRRB; represses ESRRB activity at the GATA6 promoter. Expressed in adult cerebral cortex, spinal cord, thymus, heart, lung, ovary, testis, adrenal gland, hypothalamus, spleen and kidney.

The protein resides in the nucleus. The protein localises to the cytoplasm. In terms of biological role, nuclear receptor that lacks a DNA-binding domain and acts as a corepressor that inhibits the transcriptional activity of other nuclear receptors through heterodimeric interactions. Component of a cascade required for the development of the hypothalamic-pituitary-adrenal-gonadal axis. May also have a role in the development of the embryo and in the maintenance of embryonic stem cell pluripotency. In Mus musculus (Mouse), this protein is Nuclear receptor subfamily 0 group B member 1 (Nr0b1).